The following is an 84-amino-acid chain: MSSGGLLLLLGLLTLWAELTPISGHDRPTFCNLAPESGRCRGHLRRIYYNLESNKCNVFFYGGCGGNDNNFETRDECRQTCGGK.

The N-terminal stretch at 1–24 (MSSGGLLLLLGLLTLWAELTPISG) is a signal peptide. In terms of domain architecture, BPTI/Kunitz inhibitor spans 31–81 (CNLAPESGRCRGHLRRIYYNLESNKCNVFFYGGCGGNDNNFETRDECRQTC). 3 disulfide bridges follow: Cys31-Cys81, Cys40-Cys64, and Cys56-Cys77.

This sequence belongs to the venom Kunitz-type family. In terms of tissue distribution, expressed by the venom gland.

It localises to the secreted. Serine protease inhibitor that inhibits trypsin. The sequence is that of Kunitz-type serine protease inhibitor B2 from Daboia siamensis (Eastern Russel's viper).